The following is a 338-amino-acid chain: Fructose-1,6-bisphosphatase 1 (338 aa).

Threonine 2 carries the post-translational modification N-acetylthreonine. Residues 18–22 (VMEEG) and 28–32 (TGEMT) each bind AMP. 2 residues coordinate Mg(2+): aspartate 69 and glutamate 98. AMP is bound at residue 113 to 114 (KY). Mg(2+)-binding residues include aspartate 119, leucine 121, and aspartate 122. 122 to 125 (DGSS) is a substrate binding site. Residue arginine 141 participates in AMP binding. The residue at position 151 (lysine 151) is an N6-succinyllysine. Serine 208 is modified (phosphoserine; by PKA). Residues 213-216 (NEGY), 244-249 (RYVGSM), tyrosine 265, and 275-277 (KLR) each bind substrate. Phosphotyrosine occurs at positions 216, 245, and 265. Mg(2+) is bound at residue glutamate 281.

It belongs to the FBPase class 1 family. In terms of assembly, homotetramer. Mg(2+) serves as cofactor.

It catalyses the reaction beta-D-fructose 1,6-bisphosphate + H2O = beta-D-fructose 6-phosphate + phosphate. Its pathway is carbohydrate biosynthesis; gluconeogenesis. Subject to complex allosteric regulation. The enzyme can assume an active R-state, or an inactive T-state. Intermediate conformations may exist. AMP acts as an allosteric inhibitor. AMP binding affects the turnover of bound substrate and not the affinity for substrate. Fructose 2,6-bisphosphate acts as a competitive inhibitor. Fructose 2,6-bisphosphate and AMP have synergistic effects. Catalyzes the hydrolysis of fructose 1,6-bisphosphate to fructose 6-phosphate in the presence of divalent cations, acting as a rate-limiting enzyme in gluconeogenesis. Plays a role in regulating glucose sensing and insulin secretion of pancreatic beta-cells. Appears to modulate glycerol gluconeogenesis in liver. Important regulator of appetite and adiposity; increased expression of the protein in liver after nutrient excess increases circulating satiety hormones and reduces appetite-stimulating neuropeptides and thus seems to provide a feedback mechanism to limit weight gain. This chain is Fructose-1,6-bisphosphatase 1 (FBP1), found in Sus scrofa (Pig).